Consider the following 96-residue polypeptide: Large ribosomal subunit protein bL28 (96 aa).

It belongs to the bacterial ribosomal protein bL28 family.

In Agrobacterium fabrum (strain C58 / ATCC 33970) (Agrobacterium tumefaciens (strain C58)), this protein is Large ribosomal subunit protein bL28.